The chain runs to 369 residues: 4-hydroxy-3-methylbut-2-en-1-yl diphosphate synthase (flavodoxin) (369 aa).

C270, C273, C305, and E312 together coordinate [4Fe-4S] cluster.

It belongs to the IspG family. Requires [4Fe-4S] cluster as cofactor.

The catalysed reaction is (2E)-4-hydroxy-3-methylbut-2-enyl diphosphate + oxidized [flavodoxin] + H2O + 2 H(+) = 2-C-methyl-D-erythritol 2,4-cyclic diphosphate + reduced [flavodoxin]. It functions in the pathway isoprenoid biosynthesis; isopentenyl diphosphate biosynthesis via DXP pathway; isopentenyl diphosphate from 1-deoxy-D-xylulose 5-phosphate: step 5/6. Functionally, converts 2C-methyl-D-erythritol 2,4-cyclodiphosphate (ME-2,4cPP) into 1-hydroxy-2-methyl-2-(E)-butenyl 4-diphosphate. This chain is 4-hydroxy-3-methylbut-2-en-1-yl diphosphate synthase (flavodoxin), found in Pseudomonas syringae pv. tomato (strain ATCC BAA-871 / DC3000).